Here is a 99-residue protein sequence, read N- to C-terminus: Small ribosomal subunit protein cS23 (99 aa).

This sequence belongs to the chloroplast-specific ribosomal protein cS23 family. As to quaternary structure, part of the 30S ribosomal subunit.

It is found in the plastid. It localises to the chloroplast. Functionally, probably a ribosomal protein or a ribosome-associated protein. The sequence is that of Small ribosomal subunit protein cS23 from Gracilaria tenuistipitata var. liui (Red alga).